The following is a 133-amino-acid chain: MTLNLSVLTPNRIVWDSEVEEIVLSTNSGQIGILPNHAPIATAVDIGILRIRLNDQWLTMALMGGFARIGNNEITVLVNDAEKGSDINPQEAQQTLEIAEANVKKAEGRRQKIEANLALRRARTRVEASNPIS.

The protein belongs to the ATPase epsilon chain family. As to quaternary structure, F-type ATPases have 2 components, CF(1) - the catalytic core - and CF(0) - the membrane proton channel. CF(1) has five subunits: alpha(3), beta(3), gamma(1), delta(1), epsilon(1). CF(0) has three main subunits: a, b and c.

It localises to the plastid. It is found in the chloroplast thylakoid membrane. Produces ATP from ADP in the presence of a proton gradient across the membrane. The sequence is that of ATP synthase epsilon chain, chloroplastic from Solanum lycopersicum (Tomato).